We begin with the raw amino-acid sequence, 2156 residues long: MAM and LDL-receptor class A domain-containing protein 1 (2156 aa).

Residues 1-31 (MLFFLDRMLAFPMNETFCCLWIACVFNSTLA) form the signal peptide. The Vesicular portion of the chain corresponds to 32–2076 (QQGTESFQCD…FTYAQNNTWT (2045 aa)). The region spanning 33–68 (QGTESFQCDNGVSLPPDSICDFTDQCGDSSDERHCL) is the LDL-receptor class A 1 domain. Disulfide bonds link C40-C58 and C52-C67. MAM domains are found at residues 71–229 (ERCD…GCLP) and 268–427 (QACG…ACGQ). One can recognise an LDL-receptor class A 2 domain in the interval 433-471 (LCSADEFPCTSGQCIAKESVCDSRQDCSDESDEDPATCS). Disulfide bonds link C434–C446, C441–C459, and C453–C470. MAM domains are found at residues 474–637 (LTCD…ECEI) and 652–816 (SKCD…NCTL). N813 carries N-linked (GlcNAc...) asparagine glycosylation. Residues 822-860 (SCEGLDHFWCRHTRACIEKLRLCDLVDDCGDRTDEVNCA) enclose the LDL-receptor class A 3 domain. 3 cysteine pairs are disulfide-bonded: C823–C837, C831–C850, and C844–C859. The MAM 5 domain maps to 863–1024 (LQCNFETGIC…DDLSFMDCTL (162 aa)). Residue N1049 is glycosylated (N-linked (GlcNAc...) asparagine). The 38-residue stretch at 1049 to 1086 (NCTDNEFICRSDGHCIEKMQKCDFKYDCPDKSDEASCV) folds into the LDL-receptor class A 4 domain. Disulfide bonds link C1050-C1063, C1057-C1076, and C1070-C1085. Residues 1088-1256 (EVCSFEKRSL…DDISFQDCSP (169 aa)) enclose the MAM 6 domain. N1199 is a glycosylation site (N-linked (GlcNAc...) asparagine). The LDL-receptor class A 5 domain maps to 1263 to 1301 (KCTDHEFMCANKHCIAKDKLCDFVNDCADNSDETTFICR). 3 disulfide bridges follow: C1264/C1276, C1271/C1289, and C1283/C1300. One can recognise an MAM 7 domain in the interval 1305–1465 (GRCDFEFDLC…DIVLTENCLS (161 aa)). N1414 carries N-linked (GlcNAc...) asparagine glycosylation. The 37-residue stretch at 1482-1518 (FCPLGYRECHNGKCYRLEQSCNFVDNCGDNTDENECG) folds into the LDL-receptor class A 6 domain. 3 cysteine pairs are disulfide-bonded: C1483/C1495, C1490/C1508, and C1502/C1517. Residues 1519–1676 (SSCTFEKGWC…DDIEFKNCTT (158 aa)) form the MAM 8 domain. The LDL-receptor class A 7 domain maps to 1683-1720 (LCPEITDFLCRDKKCIASHLLCDYKPDCSDRSDEAHCA). Disulfide bonds link C1684–C1697, C1692–C1710, and C1704–C1719. One can recognise an MAM 9 domain in the interval 1727-1892 (GSCNFETSSG…DISFTPECVT (166 aa)). LDL-receptor class A domains are found at residues 1902–1939 (PCEA…MDCP), 1946–1982 (LCSN…LICS), and 1985–2023 (SCSN…SSCS). Disulfide bonds link C1903/C1916, C1910/C1929, C1923/C1938, C1947/C1959, C1954/C1972, C1966/C1981, C1986/C1999, C1993/C2012, C2006/C2022, C2025/C2036, C2030/C2045, and C2047/C2056. Positions 2024–2057 (ECPLNYCRNGGTCVVEKNGPMCRCRQGWKGNRCH) constitute an EGF-like domain. Residues 2077-2097 (LLGIGLAFLMTHITVAVLCFL) form a helical membrane-spanning segment. Residues 2098–2156 (ANRKVPIRKTEGSGNCAFVNPVYGNWSNPEKTESSVYSFSNPLYGTTSGSLETLSHHLK) lie on the Cytoplasmic side of the membrane.

As to quaternary structure, interacts with FGF19. Strongly expressed in the small intestine.

It is found in the cytoplasmic vesicle membrane. Its function is as follows. Enhances production and/or transport of FGF19 and thus has a role in regulation of bile acid synthesis. The protein is MAM and LDL-receptor class A domain-containing protein 1 of Homo sapiens (Human).